The primary structure comprises 963 residues: Kinesin-1 heavy chain (963 aa).

N-acetylalanine is present on alanine 2. Residues 8-325 (NIKVMCRFRP…LLFGQRAKTI (318 aa)) form the Kinesin motor domain. 85 to 92 (GQTSSGKT) is a binding site for ATP. Lysine 213 participates in a covalent cross-link: Glycyl lysine isopeptide (Lys-Gly) (interchain with G-Cter in SUMO2). The stretch at 329 to 914 (VCVNVELTAE…AVRSKNMARR (586 aa)) forms a coiled coil. The interval 908–963 (SKNMARRGHSAQIAKPIRPGQHPAASPTHPGTVRGGGSFVQNNQPVGLRGGGGKQS) is disordered. Positions 915-963 (GHSAQIAKPIRPGQHPAASPTHPGTVRGGGSFVQNNQPVGLRGGGGKQS) are globular. Residues serine 933 and serine 945 each carry the phosphoserine modification. At arginine 956 the chain carries Omega-N-methylarginine.

The protein belongs to the TRAFAC class myosin-kinesin ATPase superfamily. Kinesin family. Kinesin subfamily. In terms of assembly, oligomer composed of two heavy chains and two light chains. Interacts with GRIP1 and PPP1R42. Interacts with SYBU. Interacts with JAKMIP1. Interacts with PLEKHM2. Interacts with ECPAS. Interacts with ZFYVE27. Found in a complex with OGT, RHOT1, RHOT2 and TRAK1. Interacts with APP (via cytoplasmic domain).

It is found in the cytoplasm. It localises to the cytoskeleton. Its subcellular location is the cytolytic granule membrane. The protein localises to the lysosome membrane. Functionally, microtubule-dependent motor required for normal distribution of mitochondria and lysosomes. May be involved in the mechanisms of growth arrest induced by exposure to DNA-damaging drugs or by cellular senescence. Can induce formation of neurite-like membrane protrusions in non-neuronal cells in a ZFYVE27-dependent manner. Regulates centrosome and nuclear positioning during mitotic entry. During the G2 phase of the cell cycle in a BICD2-dependent manner, antagonizes dynein function and drives the separation of nuclei and centrosomes. Required for anterograde axonal transportation of MAPK8IP3/JIP3 which is essential for MAPK8IP3/JIP3 function in axon elongation. Through binding with PLEKHM2 and ARL8B, directs lysosome movement toward microtubule plus ends. Involved in NK cell-mediated cytotoxicity. Drives the polarization of cytolytic granules and microtubule-organizing centers (MTOCs) toward the immune synapse between effector NK lymphocytes and target cells. The sequence is that of Kinesin-1 heavy chain (Kif5b) from Mus musculus (Mouse).